Consider the following 431-residue polypeptide: Glucose-1-phosphate adenylyltransferase (431 aa).

Position 39 (lysine 39) interacts with beta-D-fructose 1,6-bisphosphate. AMP is bound by residues arginine 40, histidine 46, and arginine 52. Tyrosine 114 is a binding site for alpha-D-glucose 1-phosphate. Arginine 130 provides a ligand contact to AMP. Alpha-D-glucose 1-phosphate-binding positions include glycine 179, 194–195 (EK), and serine 212. Arginine 386 contacts AMP. 429–431 (QER) lines the beta-D-fructose 1,6-bisphosphate pocket.

Belongs to the bacterial/plant glucose-1-phosphate adenylyltransferase family. In terms of assembly, homotetramer.

It carries out the reaction alpha-D-glucose 1-phosphate + ATP + H(+) = ADP-alpha-D-glucose + diphosphate. Its pathway is glycan biosynthesis; glycogen biosynthesis. Its activity is regulated as follows. Allosterically activated by fructose-1,6-bisphosphate (F16BP) and inhibited by AMP. Involved in the biosynthesis of ADP-glucose, a building block required for the elongation reactions to produce glycogen. Catalyzes the reaction between ATP and alpha-D-glucose 1-phosphate (G1P) to produce pyrophosphate and ADP-Glc. This chain is Glucose-1-phosphate adenylyltransferase, found in Klebsiella pneumoniae (strain 342).